The following is a 121-amino-acid chain: Autophagy-related protein 8 (121 aa).

G116 is lipidated: Phosphatidylethanolamine amidated glycine. A propeptide spans 117 to 121 (removed in mature form); the sequence is DFETA.

It belongs to the ATG8 family. Post-translationally, the C-terminal 5 residues are removed to expose Gly-116 at the C-terminus. The C-terminal Gly is then amidated with phosphatidylethanolamine by an activating system similar to that for ubiquitin.

Its subcellular location is the cytoplasmic vesicle. The protein resides in the autophagosome membrane. It is found in the vacuole membrane. Ubiquitin-like modifier involved in autophagosome formation. With cpr-1/atg4, mediates the delivery of the autophagosomes to the vacuole via the microtubule cytoskeleton. Required for selective autophagic degradation of the nucleus (nucleophagy) as well as for mitophagy which contributes to regulate mitochondrial quantity and quality by eliminating the mitochondria to a basal level to fulfill cellular energy requirements and preventing excess ROS production. Also participates in membrane fusion events that take place in the early secretory pathway. Also involved in endoplasmic reticulum-specific autophagic process and is essential for the survival of cells subjected to severe ER stress. The apg-6/atg8-PE conjugate mediates tethering between adjacent membranes and stimulates membrane hemifusion, leading to expansion of the autophagosomal membrane during autophagy. The polypeptide is Autophagy-related protein 8 (apg-6) (Neurospora crassa (strain ATCC 24698 / 74-OR23-1A / CBS 708.71 / DSM 1257 / FGSC 987)).